Consider the following 622-residue polypeptide: Golgin subfamily A member 6-like protein 7 (622 aa).

Disordered stretches follow at residues 1–82, 251–496, and 511–580; these read MMSE…QQAL, RKHE…RKQV, and EKMQ…HDNR. Composition is skewed to basic and acidic residues over residues 57–74, 251–275, 283–332, 339–367, 374–388, and 395–420; these read SPED…ENKA, RKHE…REQE, and EQMR…KQEE. A coiled-coil region spans residues 100–534; it reads KTELETALHD…EKRREKKERM (435 aa). The segment covering 477-489 has biased composition (acidic residues); the sequence is QMGEQEEQMGEQE. Composition is skewed to basic and acidic residues over residues 511-546 and 567-580; these read EKMQ…ERCS and PARE…HDNR.

Belongs to the GOLGA6 family.

The sequence is that of Golgin subfamily A member 6-like protein 7 from Homo sapiens (Human).